A 163-amino-acid polypeptide reads, in one-letter code: Nucleotide-binding protein CJE0423 (163 aa).

It belongs to the YajQ family.

Its function is as follows. Nucleotide-binding protein. The polypeptide is Nucleotide-binding protein CJE0423 (Campylobacter jejuni (strain RM1221)).